The sequence spans 317 residues: Methionyl-tRNA formyltransferase (317 aa).

(6S)-5,6,7,8-tetrahydrofolate is bound at residue 110 to 113 (SLLP).

It belongs to the Fmt family.

The catalysed reaction is L-methionyl-tRNA(fMet) + (6R)-10-formyltetrahydrofolate = N-formyl-L-methionyl-tRNA(fMet) + (6S)-5,6,7,8-tetrahydrofolate + H(+). In terms of biological role, attaches a formyl group to the free amino group of methionyl-tRNA(fMet). The formyl group appears to play a dual role in the initiator identity of N-formylmethionyl-tRNA by promoting its recognition by IF2 and preventing the misappropriation of this tRNA by the elongation apparatus. In Lactiplantibacillus plantarum (strain ATCC BAA-793 / NCIMB 8826 / WCFS1) (Lactobacillus plantarum), this protein is Methionyl-tRNA formyltransferase.